Reading from the N-terminus, the 815-residue chain is Chromatin assembly factor 1 subunit FAS1 (815 aa).

5 disordered regions span residues 1–39 (MDEV…TSEE), 292–330 (NNKE…KKQL), 434–477 (KLST…KKSR), 502–577 (QVVK…EGVQ), and 791–815 (RCLP…NENA). 2 stretches are compositionally biased toward basic and acidic residues: residues 10-21 (NENRKTMIEPKK) and 292-328 (NNKE…ELKK). Residues 244-336 (EEKLLLKQLE…KKQLQVQKQA (93 aa)) adopt a coiled-coil conformation. 2 stretches are compositionally biased toward acidic residues: residues 516 to 532 (LDYE…EEAG) and 554 to 576 (DDED…DEGV). The segment covering 806–815 (AAERLENENA) has biased composition (basic and acidic residues).

It belongs to the CHAF1A family. In terms of assembly, component of the chromatin assembly factor 1 (CAF-1) complex, composed of FAS1, FAS2 and MSI1. Interacts with CYP71. Expressed in the shoot apical meristem, young leaf primordia, root tip and first lateral root primordium at the hypocotyl/root junction.

The protein resides in the nucleus. Its function is as follows. Component of the chromatin assembly factor complex (CAF-1) involved in chromatin assembly following DNA replication and DNA repair. Assembles histone octamers onto replicating DNA in vitro. Required for several aspects of development, including seedling growth and leaf hair differentiation. Plays a critical role in the organization of shoot apical meristem (SAM) and root apical meristem (RAM) during postembryonic development by facilitating stable maintenance of gene expression states. Seems not required to maintain transcriptional repression of heterochromatic genes. Involved in heterologous recombination. May repress endocycle. This is Chromatin assembly factor 1 subunit FAS1 (FAS1) from Arabidopsis thaliana (Mouse-ear cress).